Reading from the N-terminus, the 680-residue chain is SH3 domain-binding protein 1 (680 aa).

Positions 1–11 (MMKRQLHRMRQ) are enriched in basic residues. Disordered regions lie at residues 1–24 (MMKR…TPET) and 160–184 (SQAA…HTTT). The interaction with CGNL1 stretch occupies residues 1–275 (MMKRQLHRMR…TAAPFSRVYG (275 aa)). The BAR domain occupies 81 to 262 (MAESFKELDP…RDNHSQADHS (182 aa)). Positions 160–169 (SQAAKNSGSN) are enriched in polar residues. A phosphoserine mark is found at serine 241 and serine 262. The Rho-GAP domain occupies 276-469 (VSLRTHLQDL…ALIQNADTLF (194 aa)). The interval 470 to 680 (PGDINFNVSG…RPRGLISETE (211 aa)) is interaction with CD2AP. The disordered stretch occupies residues 488 to 680 (EKVSSQQVSE…RPRGLISETE (193 aa)). The segment covering 502 to 516 (VTVPAPATTPAPTPA) has biased composition (pro residues). Serine 535 is subject to Phosphoserine. Positions 536–546 (PKVSRNPTETA) are enriched in polar residues. The segment covering 561 to 571 (PARPTMPPPQP) has biased composition (pro residues). Phosphoserine is present on serine 582. Position 592 is a phosphothreonine (threonine 592). The SH3-binding motif lies at 607–616 (APTMPPPLPP). Residues 609–621 (TMPPPLPPVPPQP) are compositionally biased toward pro residues. Serine 632 bears the Phosphoserine mark. The segment covering 660-671 (HPPPPALPPQPR) has biased composition (pro residues).

Interacts with RAC1. Interacts with the exocyst via EXOC4 and EXOC8; required for the localization of both SH3BP1 and the exocyst to the leading edge of migrating cells. Interacts with CD2AP and CGNL1; probably part of a complex at cell junctions. Interacts with CAPZA1; recruits CAPZA1 to forming cell junctions. May interact with AFDN. Interacts with PLXND1; they dissociate upon SEMA3E binding to PLXND1 allowing SH3BP1 to transduce downstream signal through RAC1 inactivation. Interacts with ABL1, GRB2 and SRC (via SH3 domain). In terms of tissue distribution, expressed in all tissues examined. Highest levels found in spleen and brain, lowest in heart and liver.

It localises to the cell projection. Its subcellular location is the cell junction. The protein localises to the tight junction. It is found in the adherens junction. The protein resides in the phagocytic cup. It localises to the nucleus. Its subcellular location is the cytoplasm. The protein localises to the cytosol. Functionally, GTPase activating protein (GAP) which specifically converts GTP-bound Rho-type GTPases including RAC1 and CDC42 in their inactive GDP-bound form. By specifically inactivating RAC1 at the leading edge of migrating cells, it regulates the spatiotemporal organization of cell protrusions which is important for proper cell migration. Also negatively regulates CDC42 in the process of actin remodeling and the formation of epithelial cell junctions. Through its GAP activity toward RAC1 and/or CDC42 plays a specific role in phagocytosis of large particles. Specifically recruited by a PI3 kinase/PI3K-dependent mechanism to sites of large particles engagement, inactivates RAC1 and/or CDC42 allowing the reorganization of the underlying actin cytoskeleton required for engulfment. It also plays a role in angiogenesis and the process of repulsive guidance as part of a semaphorin-plexin signaling pathway. Following the binding of PLXND1 to extracellular SEMA3E it dissociates from PLXND1 and inactivates RAC1, inducing the intracellular reorganization of the actin cytoskeleton and the collapse of cells. This chain is SH3 domain-binding protein 1, found in Mus musculus (Mouse).